Here is a 481-residue protein sequence, read N- to C-terminus: Alpha-ketoglutaric semialdehyde dehydrogenase 1 (481 aa).

Residues 154–155, 178–181, and 231–232 contribute to the NADP(+) site; these read WN, KAPE, and GS. E253 functions as the Proton acceptor in the catalytic mechanism. L254 is a binding site for NADP(+). The Nucleophile role is filled by C287. E384 contacts NADP(+).

It belongs to the aldehyde dehydrogenase family. In terms of assembly, homotetramer.

The enzyme catalyses 2,5-dioxopentanoate + NADP(+) + H2O = 2-oxoglutarate + NADPH + 2 H(+). The catalysed reaction is 2,5-dioxopentanoate + NAD(+) + H2O = 2-oxoglutarate + NADH + 2 H(+). It catalyses the reaction succinate semialdehyde + NAD(+) + H2O = succinate + NADH + 2 H(+). Catalyzes the NAD(P)(+)-dependent oxidation of alpha-ketoglutaric semialdehyde (alphaKGSA) to alpha-ketoglutarate. Is involved in a degradation pathway of L-arabinose that allows A.brasilense to grow on L-arabinose as a sole carbon source. Prefers NAD(+) to NADP(+) as a cosubstrate. Displays broad substrate specificity: exhibits the highest activity with alphaKGSA and succinic semialdehyde as substrates, but to a lesser extent, is also active with glutaraldehyde, benzaldehyde, and a number of aldehydes from C3 to C8. This Azospirillum brasilense protein is Alpha-ketoglutaric semialdehyde dehydrogenase 1 (araE).